The sequence spans 1009 residues: Protein translocase subunit SecA (1009 aa).

Residues Q86, 104–108 (GEGKT), and D497 each bind ATP. 2 disordered regions span residues 869 to 894 (AVPQ…GQQP) and 949 to 1009 (ERRP…RNAG). 2 stretches are compositionally biased toward low complexity: residues 883-894 (PVPAATAPGQQP) and 953-973 (SGAA…AGAG). The Zn(2+) site is built by C990, C992, C1001, and H1002.

Belongs to the SecA family. Monomer and homodimer. Part of the essential Sec protein translocation apparatus which comprises SecA, SecYEG and auxiliary proteins SecDF. Other proteins may also be involved. Zn(2+) is required as a cofactor.

The protein resides in the cell membrane. It is found in the cytoplasm. It carries out the reaction ATP + H2O + cellular proteinSide 1 = ADP + phosphate + cellular proteinSide 2.. Functionally, part of the Sec protein translocase complex. Interacts with the SecYEG preprotein conducting channel. Has a central role in coupling the hydrolysis of ATP to the transfer of proteins into and across the cell membrane, serving as an ATP-driven molecular motor driving the stepwise translocation of polypeptide chains across the membrane. The sequence is that of Protein translocase subunit SecA from Acidothermus cellulolyticus (strain ATCC 43068 / DSM 8971 / 11B).